The sequence spans 750 residues: Glutamate carboxypeptidase 2 (750 aa).

At 1–19 (MWNLLHETDSAVATARRPR) the chain is on the cytoplasmic side. Ser-10 is subject to Phosphoserine. The helical; Signal-anchor for type II membrane protein transmembrane segment at 20–43 (WLCAGALVLAGGFFLLGFLFGWFI) threads the bilayer. Residues 44–750 (KSSNEATNIT…AAAETLSEVA (707 aa)) lie on the Extracellular side of the membrane. N-linked (GlcNAc...) asparagine glycans are attached at residues Asn-51, Asn-76, Asn-121, Asn-140, Asn-153, and Asn-195. Positions 210 and 257 each coordinate substrate. The Ca(2+) site is built by Thr-269 and Tyr-272. The interval 274 to 587 (ANEYAYRRGI…QVRGGMVFEL (314 aa)) is NAALADase. Asn-336 carries N-linked (GlcNAc...) asparagine glycosylation. Positions 377 and 387 each coordinate Zn(2+). Residue Glu-424 coordinates substrate. Residue Glu-424 is the Nucleophile; for NAALADase activity of the active site. Glu-425 contributes to the Zn(2+) binding site. Ca(2+)-binding residues include Glu-433 and Glu-436. Zn(2+) is bound at residue Asp-453. Asn-459 and Asn-476 each carry an N-linked (GlcNAc...) asparagine glycan. Substrate contacts are provided by residues 517–518 (SG), Asn-519, 534–536 (RAR), Tyr-552, and 552–553 (YH). His-553 provides a ligand contact to Zn(2+). Ser-628 (charge relay system) is an active-site residue. A glycan (N-linked (GlcNAc...) asparagine) is linked at Asn-638. Catalysis depends on charge relay system residues Asp-666 and His-689. 699–700 (KY) provides a ligand contact to substrate.

The protein belongs to the peptidase M28 family. M28B subfamily. In terms of assembly, homodimer. Zn(2+) serves as cofactor. Post-translationally, the first two amino acids at the N-terminus of isoform PSMA' appear to be cleaved by limited proteolysis. In terms of processing, the N-terminus is blocked. Highly expressed in prostate epithelium. Detected in urinary bladder, kidney, testis, ovary, fallopian tube, breast, adrenal gland, liver, esophagus, stomach, small intestine, colon and brain (at protein level). Detected in the small intestine, brain, kidney, liver, spleen, colon, trachea, spinal cord and the capillary endothelium of a variety of tumors. Expressed specifically in jejunum brush border membranes. In the brain, highly expressed in the ventral striatum and brain stem. Also expressed in fetal liver and kidney. Isoform PSMA' is the most abundant form in normal prostate. Isoform PSMA-1 is the most abundant form in primary prostate tumors. Isoform PSMA-9 is specifically expressed in prostate cancer.

The protein localises to the cell membrane. Its subcellular location is the cytoplasm. The catalysed reaction is Release of an unsubstituted, C-terminal glutamyl residue, typically from Ac-Asp-Glu or folylpoly-gamma-glutamates.. The NAALADase activity is inhibited by beta-NAAG, quisqualic acid, 2-(phosphonomethyl) pentanedioic acid (PMPA) and EDTA. Activated by cobalt. Functionally, has both folate hydrolase and N-acetylated-alpha-linked-acidic dipeptidase (NAALADase) activity. Has a preference for tri-alpha-glutamate peptides. In the intestine, required for the uptake of folate. In the brain, modulates excitatory neurotransmission through the hydrolysis of the neuropeptide, N-aceylaspartylglutamate (NAAG), thereby releasing glutamate. Involved in prostate tumor progression. In terms of biological role, also exhibits a dipeptidyl-peptidase IV type activity. In vitro, cleaves Gly-Pro-AMC. In Homo sapiens (Human), this protein is Glutamate carboxypeptidase 2.